Here is a 492-residue protein sequence, read N- to C-terminus: MATFKDACFHYRRITKLNRELLRIGANSVWTPVSTNKIKGWCVECCQLTELTFCHGCSLAHVCQWCIQNKRCFLDNEPHLLKLRTFESPITKEKLQCIINLYNMLFPINSSIINKFRKTVKQRKCRNEIDRSWYNQLLLPITLNAAVFKFHSREVYIFGFYEGSSSCVNLPYRLVNCIDLYDKLLLDQINFDRMSSLPANLQSIYANKYFKLSRLPSMKLKQIYYSDFSKQNLVNKYKSKSRMVLRNLTEFTWDSQLNLHYDLLNNKDKILAALSTSSLKQFETHDLNLGRIKADVFELGRHCKPNYISSNHWQPASTISQCKWCNVKYAFRNMDWKMESMYNELLSFIQSCYKSNVNVGHCSSIERVYPLVKDILWHSITKYLDQTIEKLFNAMNPVQVNDQKVISFHWQIDIALYTHIKMILKTEALPFTFTLHQFNSIIKGIVNQWCNVSELDDLPLCTEQTDTLVRLEEEGKLAEEYELLISDSEDDD.

Positions 1–81 (MATFKDACFH…CFLDNEPHLL (81 aa)) are RNA-binding. Positions 42–79 (CVECCQLTELTFCHGCSLAHVCQWCIQNKRCFLDNEPH) are zinc-binding domain. Residues 82–176 (KLRTFESPIT…CVNLPYRLVN (95 aa)) form an important for cytoskeleton localization region. The interaction with host IRF3 stretch occupies residues 318 to 492 (TISQCKWCNV…LLISDSEDDD (175 aa)). Positions 483 to 486 (LLIS) match the pLxIS motif motif.

This sequence belongs to the rotavirus NSP1 family. As to quaternary structure, interacts (via C-terminus) with host IRF3; this interaction leads to IRF3 degradation. Interacts with host IRF7; this interaction leads to IRF7 degradation. Interacts with host CUL1 and CUL3.

The protein resides in the host cytoplasm. It localises to the host cytoskeleton. Plays a role in the inhibition of host innate immunity by inducing the degradation of key host factors required to activate interferon production such as IRF3, IRF5 or IRF7. Associates with components of cullin RING ligases (CRLs) including CUL1 or CUL3, which are essential multisubunit ubiquitination complexes, to modulate their activities. This Homo sapiens (Human) protein is Non-structural protein 1.